A 149-amino-acid polypeptide reads, in one-letter code: Large ribosomal subunit protein bL9 (149 aa).

The protein belongs to the bacterial ribosomal protein bL9 family.

Binds to the 23S rRNA. In Helicobacter acinonychis (strain Sheeba), this protein is Large ribosomal subunit protein bL9.